Here is a 335-residue protein sequence, read N- to C-terminus: Fructose-1,6-bisphosphatase class 1 (335 aa).

Positions 92, 114, 116, and 117 each coordinate Mg(2+). Substrate-binding positions include 117–120 (DGSS), asparagine 210, tyrosine 242, and lysine 274. Glutamate 280 provides a ligand contact to Mg(2+).

This sequence belongs to the FBPase class 1 family. Homotetramer. Mg(2+) is required as a cofactor.

The protein localises to the cytoplasm. It catalyses the reaction beta-D-fructose 1,6-bisphosphate + H2O = beta-D-fructose 6-phosphate + phosphate. It functions in the pathway carbohydrate biosynthesis; gluconeogenesis. The polypeptide is Fructose-1,6-bisphosphatase class 1 (Lawsonia intracellularis (strain PHE/MN1-00)).